The following is an 827-amino-acid chain: Disintegrin and metalloproteinase domain-containing protein 17 (827 aa).

The first 17 residues, Met1–Ala17, serve as a signal peptide directing secretion. The propeptide occupies Pro18 to Arg214. Asn157 is a glycosylation site (N-linked (GlcNAc...) asparagine). The short motif at Lys182 to Ala189 is the Cysteine switch element. A Zn(2+)-binding site is contributed by Cys184. The Extracellular portion of the chain corresponds to Arg215–Asn671. One can recognise a Peptidase M12B domain in the interval Asn223–Ser474. Disulfide bonds link Cys225/Cys333, Cys365/Cys469, and Cys423/Cys453. Residue Asn264 is glycosylated (N-linked (GlcNAc...) asparagine). His405 lines the Zn(2+) pocket. The active site involves Glu406. The Zn(2+) site is built by His409 and His415. N-linked (GlcNAc...) asparagine glycans are attached at residues Asn452, Asn498, Asn539, and Asn551. In terms of domain architecture, Disintegrin spans Asn475 to Asp563. 4 cysteine pairs are disulfide-bonded: Cys534-Cys555, Cys573-Cys582, Cys578-Cys591, and Cys593-Cys600. Residues Cys603 to Asn671 form a crambin-like region. N-linked (GlcNAc...) asparagine glycosylation is present at Asn606. Residues Ile672–His692 traverse the membrane as a helical segment. The Cytoplasmic portion of the chain corresponds to Cys693–Cys827. An SH3-binding motif is present at residues Pro731–Arg738. Position 735 is a phosphothreonine; by MAPK14 (Thr735). The residue at position 764 (Thr764) is a Phosphothreonine. Positions Gln766–Cys827 are disordered. Ser770 is subject to Phosphoserine. Composition is skewed to basic and acidic residues over residues Thr771–Pro784, Ser794–Ala810, and Ser818–Cys827. 2 positions are modified to phosphoserine: Ser794 and Ser822.

In terms of assembly, interacts with MAD2L1, MAPK14 and MUC1. Interacts with iRhom1/RHBDF1 and iRhom2/RHBDF2. Interacts with FRMD8 via its interaction with iRhom1/RHBDF1 and iRhom2/RHBDF2. Interacts with TSPAN8. Requires Zn(2+) as cofactor. Post-translationally, the precursor is cleaved by a furin endopeptidase. In terms of processing, phosphorylated. Stimulation by growth factor or phorbol 12-myristate 13-acetate induces phosphorylation of Ser-822 but decreases phosphorylation of Ser-794. Phosphorylation at Thr-735 by MAPK14 is required for ADAM17-mediated ectodomain shedding.

The protein localises to the membrane. The enzyme catalyses Narrow endopeptidase specificity. Cleaves Pro-Leu-Ala-Gln-Ala-|-Val-Arg-Ser-Ser-Ser in the membrane-bound, 26-kDa form of tumor necrosis factor alpha (TNFalpha). Similarly cleaves other membrane-anchored, cell-surface proteins to 'shed' the extracellular domains.. Functionally, transmembrane metalloprotease which mediates the ectodomain shedding of a myriad of transmembrane proteins including adhesion proteins, growth factor precursors and cytokines important for inflammation and immunity. Cleaves the membrane-bound precursor of TNF-alpha to its mature soluble form. Responsible for the proteolytical release of soluble JAM3 from endothelial cells surface. Responsible for the proteolytic release of several other cell-surface proteins, including p75 TNF-receptor, interleukin 1 receptor type II, p55 TNF-receptor, transforming growth factor-alpha, L-selectin, growth hormone receptor, MUC1 and the amyloid precursor protein. Acts as an activator of Notch pathway by mediating cleavage of Notch, generating the membrane-associated intermediate fragment called Notch extracellular truncation (NEXT). Plays a role in the proteolytic processing of ACE2. Plays a role in hemostasis through shedding of GP1BA, the platelet glycoprotein Ib alpha chain. Mediates the proteolytic cleavage of LAG3, leading to release the secreted form of LAG3. Mediates the proteolytic cleavage of IL6R, leading to the release of secreted form of IL6R. Mediates the proteolytic cleavage and shedding of FCGR3A upon NK cell stimulation, a mechanism that allows for increased NK cell motility and detachment from opsonized target cells. Cleaves TREM2, resulting in shedding of the TREM2 ectodomain. The protein is Disintegrin and metalloproteinase domain-containing protein 17 (Adam17) of Rattus norvegicus (Rat).